The sequence spans 155 residues: Large ribosomal subunit protein eL24 (155 aa).

Positions 92-155 are disordered; it reads AKRNMKPEVR…KAAPRVGGKR (64 aa). Residues 96–117 are compositionally biased toward basic and acidic residues; that stretch reads MKPEVRKAQREQAIKQAKEQKK. Residues 124-133 are compositionally biased toward low complexity; the sequence is KTTAPPTKGK.

The protein belongs to the eukaryotic ribosomal protein eL24 family.

The sequence is that of Large ribosomal subunit protein eL24 (RpL24) from Plutella xylostella (Diamondback moth).